Here is a 974-residue protein sequence, read N- to C-terminus: Serine/threonine-protein kinase 10 (974 aa).

The Protein kinase domain occupies 37–295 (WEIIGELGDG…AAQLLEHPFV (259 aa)). ATP-binding positions include 43 to 51 (LGDGAFGKV) and Lys-66. The Proton acceptor role is filled by Asp-158. The segment covering 320–332 (EDNHEDGEDEDPA) has biased composition (acidic residues). A disordered region spans residues 320-479 (EDNHEDGEDE…EKEDHCEETQ (160 aa)). Positions 343-353 (DPSQTSATSLN) are enriched in polar residues. Basic and acidic residues-rich tracts occupy residues 382–406 (PLKE…ESEA) and 458–477 (TMEK…HCEE). Coiled-coil stretches lie at residues 605-729 (QKEQ…EEQK) and 870-950 (EKVK…EHLK).

It belongs to the protein kinase superfamily. STE Ser/Thr protein kinase family. STE20 subfamily. As to quaternary structure, homodimer. Autophosphorylates.

The protein localises to the cell membrane. The catalysed reaction is L-seryl-[protein] + ATP = O-phospho-L-seryl-[protein] + ADP + H(+). It catalyses the reaction L-threonyl-[protein] + ATP = O-phospho-L-threonyl-[protein] + ADP + H(+). In terms of biological role, may act as a polo kinase kinase by mediating phosphorylation of plk1. This chain is Serine/threonine-protein kinase 10 (stk10), found in Danio rerio (Zebrafish).